A 427-amino-acid chain; its full sequence is MTETNFDFLAQGDPAIAAIIGRELQRQQEHLELIASENFASPAVMAAQGSVLTNKYAEGLPSKRYYGGCEFVDQAEELAIERAKELFGAAHANVQPHSGAQANFAVFLTLLQPGDTFLGMDLSHGGHLTHGSPVNVSGKWFNAGHYGVNRETERLDYDAIRELALQHRPKLIICGYSAYPRTIDFAKFREIADEVGAYLLADMAHIAGLVAAGLHPSPIPHCDVVTTTTHKTLRGPRGGLILTRDAELGKKLDKSVFPGTQGGPLEHVIAAKAVAFGEALRPEFKTYSAQVIANAQALARQLQARGLKIVSDGTDNHLLLVDLRSIGMTGKVADLLVSDVNITANKNTVPFDPESPFVTSGIRLGTAAMTTRGFKEAEFAIVADIIADRLLNPEDSSMEDSCRRRVLELCQRFPLYPHLSPATPVAV.

(6S)-5,6,7,8-tetrahydrofolate-binding positions include leucine 122 and 126 to 128 (GHL). The residue at position 231 (lysine 231) is an N6-(pyridoxal phosphate)lysine. A (6S)-5,6,7,8-tetrahydrofolate-binding site is contributed by 355–357 (SPF).

Belongs to the SHMT family. Homodimer. Requires pyridoxal 5'-phosphate as cofactor.

It localises to the cytoplasm. The catalysed reaction is (6R)-5,10-methylene-5,6,7,8-tetrahydrofolate + glycine + H2O = (6S)-5,6,7,8-tetrahydrofolate + L-serine. Its pathway is one-carbon metabolism; tetrahydrofolate interconversion. It functions in the pathway amino-acid biosynthesis; glycine biosynthesis; glycine from L-serine: step 1/1. Its function is as follows. Catalyzes the reversible interconversion of serine and glycine with tetrahydrofolate (THF) serving as the one-carbon carrier. This reaction serves as the major source of one-carbon groups required for the biosynthesis of purines, thymidylate, methionine, and other important biomolecules. Also exhibits THF-independent aldolase activity toward beta-hydroxyamino acids, producing glycine and aldehydes, via a retro-aldol mechanism. The chain is Serine hydroxymethyltransferase from Synechococcus sp. (strain ATCC 27144 / PCC 6301 / SAUG 1402/1) (Anacystis nidulans).